The sequence spans 1147 residues: Protein lin-41 (1147 aa).

Residues 1-93 (MATIVPCSLE…PPSMIQSPQQ (93 aa)) are disordered. The segment covering 33 to 47 (SGNELSMGGSSSEGD) has biased composition (low complexity). Residues 48-65 (SMSHHRGEHSPNHHHQDN) show a composition bias toward basic and acidic residues. Residues 84 to 93 (PPSMIQSPQQ) are compositionally biased toward low complexity. The RING-type zinc-finger motif lies at 114-155 (CSVCSKSSTIGVLPFVCAHKTCQSCYQMTPSSYDRRACKLCG). The B box-type; atypical zinc-finger motif lies at 366-412 (MGPIQCQGCESKISFAYCMQCQEALCIHCVQAHQRVRATKQHAFVEL). Cys371, Cys374, Cys394, and His398 together coordinate Zn(2+). Residues 565–618 (AFDTHVNALEERRKELLKRVETVKNLKLSVLISQAESLQSKQIDLQQAIQTATK) are a coiled coil. One copy of the Filamin repeat lies at 723–817 (ACGDLLSSSI…ISGCPTTMDI (95 aa)). 6 NHL repeats span residues 832–875 (ILTF…FDKD), 879–922 (ISKF…FDEN), 926–969 (LLKF…FTPQ), 974–1017 (RKCG…LSPR), 1022–1065 (MKVY…FASD), and 1107–1147 (SAPT…IRVF). Positions 1104–1123 (AFSSAPTPLTPSPRQLLDRP) are disordered.

It belongs to the TRIM/RBCC family.

The protein resides in the cytoplasm. It localises to the P-body. In terms of biological role, heterochronic protein which acts downstream of let-7 in temporal patterning. Plays a role in the developmental timing of postembryonic hypodermal seam cell division and fusion events and adult alae production. Represses lin-29 during late larval stages, which prevents terminal differentiation of hypodermal seam cells and promotes their division. Involved in post-transcriptional gene regulation, uses two independent pathways. Has direct and specific RNA-binding activity and, depending on the location (5'UTR or 3'UTR) of the target site, triggers either mRNA decay or repression of translation. Degrades the mRNA of transcription factor dmd-3 to govern the timing and extent of male tail tip morphogenesis. Plays a role in the sexual maturation of the nervous system. The sequence is that of Protein lin-41 from Caenorhabditis elegans.